The sequence spans 90 residues: Large ribosomal subunit protein bL27 (90 aa).

Positions 1 to 21 (MAHKKAGGSSRNGRDSQAKRL) are disordered.

Belongs to the bacterial ribosomal protein bL27 family.

The chain is Large ribosomal subunit protein bL27 from Laribacter hongkongensis (strain HLHK9).